Reading from the N-terminus, the 483-residue chain is Cysteine proteinase 1, mitochondrial (483 aa).

Residues 1 to 30 constitute a mitochondrion transit peptide; the sequence is MLPTSVSRSLYLKTFRSHLLRAPQIVLKRM. Active-site residues include C102, H398, and N421. A propeptide (removed in mature form; by autocatalysis) is located at residue K483.

Belongs to the peptidase C1 family. In terms of assembly, homohexamer. Binds to nucleic acids. Binds single-stranded DNA and RNA with higher affinity than double-stranded DNA. The N-terminus of isoform Cytoplasmic is blocked.

The protein localises to the mitochondrion. It is found in the cytoplasm. It catalyses the reaction Inactivates bleomycin B2 (a cytotoxic glycometallopeptide) by hydrolysis of a carboxyamide bond of beta-aminoalanine, but also shows general aminopeptidase activity. The specificity varies somewhat with source, but amino acid arylamides of Met, Leu and Ala are preferred.. Inhibited by E64, a specific inhibitor of cysteine proteases, N-ethylmaleimide, iodacetamide, and mercury and zinc ions. The normal physiological role of the enzyme is unknown, but it is not essential for the viability of yeast cells. Has aminopeptidase activity, shortening substrate peptides sequentially by 1 amino acid. Has bleomycin hydrolase activity, which can protect the cell from the toxic effects of bleomycin. Has homocysteine-thiolactonase activity, protecting the cell against homocysteine toxicity. Acts as a repressor in the GAL4 regulatory system, but this does not require either the peptidase or nucleic acid-binding activities. In Saccharomyces cerevisiae (strain AWRI1631) (Baker's yeast), this protein is Cysteine proteinase 1, mitochondrial (LAP3).